We begin with the raw amino-acid sequence, 341 residues long: Methionine import ATP-binding protein MetN 2 (341 aa).

The ABC transporter domain maps to 2–241 (IQFKNISKHY…PQHPTTKTFI (240 aa)). 38–45 (GYSGAGKS) is a binding site for ATP.

This sequence belongs to the ABC transporter superfamily. Methionine importer (TC 3.A.1.24) family. The complex is composed of two ATP-binding proteins (MetN), two transmembrane proteins (MetI) and a solute-binding protein (MetQ).

The protein resides in the cell inner membrane. It catalyses the reaction L-methionine(out) + ATP + H2O = L-methionine(in) + ADP + phosphate + H(+). The catalysed reaction is D-methionine(out) + ATP + H2O = D-methionine(in) + ADP + phosphate + H(+). In terms of biological role, part of the ABC transporter complex MetNIQ involved in methionine import. Responsible for energy coupling to the transport system. This Acinetobacter baylyi (strain ATCC 33305 / BD413 / ADP1) protein is Methionine import ATP-binding protein MetN 2.